Consider the following 367-residue polypeptide: Heparan sulfate glucosamine 3-O-sulfotransferase 2 (367 aa).

Residues Met-1–Arg-19 are Cytoplasmic-facing. Residues Leu-20–Cys-39 form a helical; Signal-anchor for type II membrane protein membrane-spanning segment. Topologically, residues Cys-40 to Glu-367 are lumenal. Residues Ala-61 to Gly-110 form a disordered region. Over residues Ser-84–Pro-96 the composition is skewed to low complexity. Residue Asn-102 is glycosylated (N-linked (GlcNAc...) asparagine). Lys-124 to Arg-128 contacts 3'-phosphoadenylyl sulfate. Residues Glu-146–Arg-152 and Lys-177–Ser-180 contribute to the substrate site. Asn-193 is a glycosylation site (N-linked (GlcNAc...) asparagine). 3'-phosphoadenylyl sulfate is bound by residues Arg-205 and Ser-213. A glycan (N-linked (GlcNAc...) asparagine) is linked at Asn-235. Position 245–246 (Trp-245–Asn-246) interacts with substrate. The N-linked (GlcNAc...) asparagine glycan is linked to Asn-306. A disulfide bond links Cys-313 and Cys-325. A 3'-phosphoadenylyl sulfate-binding site is contributed by Lys-330 to His-334.

Belongs to the sulfotransferase 1 family. As to expression, highly expressed in the brain and weakly expressed in the heart, placenta, lung and skeletal muscle.

The protein resides in the golgi apparatus membrane. The enzyme catalyses alpha-D-glucosaminyl-[heparan sulfate](n) + 3'-phosphoadenylyl sulfate = 3-sulfo-alpha-D-glucosaminyl-[heparan sulfate](n) + adenosine 3',5'-bisphosphate + H(+). Its function is as follows. Sulfotransferase that utilizes 3'-phospho-5'-adenylyl sulfate (PAPS) to catalyze the transfer of a sulfo group to an N-unsubstituted glucosamine linked to a 2-O-sulfo iduronic acid unit on heparan sulfate. Catalyzes the O-sulfation of glucosamine in GlcA2S-GlcNS. Unlike HS3ST1/3-OST-1, does not convert non-anticoagulant heparan sulfate to anticoagulant heparan sulfate. This Homo sapiens (Human) protein is Heparan sulfate glucosamine 3-O-sulfotransferase 2 (HS3ST2).